A 93-amino-acid polypeptide reads, in one-letter code: MKQSLAVKTFEDLFAELGERARTRPAGSATVAALDGGVHGLGKKILEEAGEVWLAAEHESDDALAGEISQLLYWTQVLMTARGLSLDDVYRKL.

Belongs to the PRA-PH family.

It localises to the cytoplasm. The catalysed reaction is 1-(5-phospho-beta-D-ribosyl)-ATP + H2O = 1-(5-phospho-beta-D-ribosyl)-5'-AMP + diphosphate + H(+). Its pathway is amino-acid biosynthesis; L-histidine biosynthesis; L-histidine from 5-phospho-alpha-D-ribose 1-diphosphate: step 2/9. The protein is Phosphoribosyl-ATP pyrophosphatase of Mycolicibacterium paratuberculosis (strain ATCC BAA-968 / K-10) (Mycobacterium paratuberculosis).